Reading from the N-terminus, the 381-residue chain is Dof zinc finger protein 2 (381 aa).

Residues 19–81 (MLMGANPNPN…ARPQKEKALN (63 aa)) form a disordered region. Low complexity-rich tracts occupy residues 23 to 32 (ANPNPNGSSN) and 40 to 59 (SAASAQRPIAPPAAGAAAGA). Positions 68-79 (TERRARPQKEKA) are enriched in basic and acidic residues. A Dof-type zinc finger spans residues 80-134 (LNCPRCNSTNTKFCYYNNYSLQQPRYFCKTCRRYWTEGGSLRNVPVGGGSRKNKR). The Zn(2+) site is built by Cys82, Cys85, Cys107, and Cys110. The disordered stretch occupies residues 329-349 (AGDANSGGDHQYDHGKNQGGG).

The protein localises to the nucleus. In terms of biological role, transcription factor that may transactivate seed storage protein genes in developing seeds. The chain is Dof zinc finger protein 2 from Oryza sativa subsp. japonica (Rice).